The sequence spans 253 residues: MSESPYKAGTTHFGFRDVAAKDKQKLVGQVFTSVARNYDLMNDLMSLGVHRAWKRYYVATAQVKPGDRVLDLAGGTGDIAALLKERVGAEGSVVLGDINAGMLSVGRDRLTNRGLVLGLDYVQCNAEALPFLDNSFDLVTIAFGLRNVTDKDAGLREMYRVLKVGGQARVLEFSEVTADWFKPIYDFHSFKILPKLGKLFANDSDSYQYLAESIRKHPPQDELKAMMGQAGFERCHYKNLTGGIVSIHSGYKL.

S-adenosyl-L-methionine-binding positions include Thr76, Asp97, and 125 to 126 (NA).

This sequence belongs to the class I-like SAM-binding methyltransferase superfamily. MenG/UbiE family.

The catalysed reaction is a 2-demethylmenaquinol + S-adenosyl-L-methionine = a menaquinol + S-adenosyl-L-homocysteine + H(+). It catalyses the reaction a 2-methoxy-6-(all-trans-polyprenyl)benzene-1,4-diol + S-adenosyl-L-methionine = a 5-methoxy-2-methyl-3-(all-trans-polyprenyl)benzene-1,4-diol + S-adenosyl-L-homocysteine + H(+). The protein operates within quinol/quinone metabolism; menaquinone biosynthesis; menaquinol from 1,4-dihydroxy-2-naphthoate: step 2/2. It functions in the pathway cofactor biosynthesis; ubiquinone biosynthesis. Functionally, methyltransferase required for the conversion of demethylmenaquinol (DMKH2) to menaquinol (MKH2) and the conversion of 2-polyprenyl-6-methoxy-1,4-benzoquinol (DDMQH2) to 2-polyprenyl-3-methyl-6-methoxy-1,4-benzoquinol (DMQH2). The polypeptide is Ubiquinone/menaquinone biosynthesis C-methyltransferase UbiE (Stenotrophomonas maltophilia (strain K279a)).